The chain runs to 327 residues: Ferrochelatase (327 aa).

The Fe cation site is built by H187 and E265.

It belongs to the ferrochelatase family.

Its subcellular location is the cytoplasm. It carries out the reaction heme b + 2 H(+) = protoporphyrin IX + Fe(2+). The protein operates within porphyrin-containing compound metabolism; protoheme biosynthesis; protoheme from protoporphyrin-IX: step 1/1. Functionally, catalyzes the ferrous insertion into protoporphyrin IX. The protein is Ferrochelatase of Chlamydia pneumoniae (Chlamydophila pneumoniae).